A 393-amino-acid chain; its full sequence is Lipid-A-disaccharide synthase (393 aa).

The protein belongs to the LpxB family.

It carries out the reaction a lipid X + a UDP-2-N,3-O-bis[(3R)-3-hydroxyacyl]-alpha-D-glucosamine = a lipid A disaccharide + UDP + H(+). The protein operates within bacterial outer membrane biogenesis; LPS lipid A biosynthesis. Condensation of UDP-2,3-diacylglucosamine and 2,3-diacylglucosamine-1-phosphate to form lipid A disaccharide, a precursor of lipid A, a phosphorylated glycolipid that anchors the lipopolysaccharide to the outer membrane of the cell. The chain is Lipid-A-disaccharide synthase from Bordetella pertussis (strain Tohama I / ATCC BAA-589 / NCTC 13251).